A 611-amino-acid chain; its full sequence is Broad-specificity linear acyl-CoA dehydrogenase FadE5 (611 aa).

Residues Met-162–Thr-165, Ser-171, and Thr-198 each bind FAD. Ser-171 provides a ligand contact to a 2,3-saturated acyl-CoA. A 2,3-saturated acyl-CoA is bound by residues Thr-224–Lys-225 and Arg-301. Arg-326 is a binding site for FAD. Residue Lys-338 participates in a 2,3-saturated acyl-CoA binding. An FAD-binding site is contributed by Gln-420–Gly-424. Residue Glu-447 participates in a 2,3-saturated acyl-CoA binding. Residue Glu-447 is the Proton acceptor of the active site. Thr-449 lines the FAD pocket. A 2,3-saturated acyl-CoA is bound by residues Asp-456 and Arg-460 to Lys-461.

It belongs to the acyl-CoA dehydrogenase family. In terms of assembly, homodimer. FAD is required as a cofactor.

The enzyme catalyses a long-chain 2,3-saturated fatty acyl-CoA + oxidized [electron-transfer flavoprotein] + H(+) = a long-chain (2E)-enoyl-CoA + reduced [electron-transfer flavoprotein]. It carries out the reaction a medium-chain 2,3-saturated fatty acyl-CoA + oxidized [electron-transfer flavoprotein] + H(+) = a medium-chain (2E)-enoyl-CoA + reduced [electron-transfer flavoprotein]. It catalyses the reaction a short-chain 2,3-saturated fatty acyl-CoA + oxidized [electron-transfer flavoprotein] + H(+) = a short-chain (2E)-enoyl-CoA + reduced [electron-transfer flavoprotein]. The catalysed reaction is octadecanoyl-CoA + oxidized [electron-transfer flavoprotein] + H(+) = (2E)-octadecenoyl-CoA + reduced [electron-transfer flavoprotein]. The enzyme catalyses oxidized [electron-transfer flavoprotein] + hexadecanoyl-CoA + H(+) = (2E)-hexadecenoyl-CoA + reduced [electron-transfer flavoprotein]. It carries out the reaction dodecanoyl-CoA + oxidized [electron-transfer flavoprotein] + H(+) = (2E)-dodecenoyl-CoA + reduced [electron-transfer flavoprotein]. It catalyses the reaction decanoyl-CoA + oxidized [electron-transfer flavoprotein] + H(+) = (2E)-decenoyl-CoA + reduced [electron-transfer flavoprotein]. The catalysed reaction is hexanoyl-CoA + oxidized [electron-transfer flavoprotein] + H(+) = (2E)-hexenoyl-CoA + reduced [electron-transfer flavoprotein]. The enzyme catalyses butanoyl-CoA + oxidized [electron-transfer flavoprotein] + H(+) = (2E)-butenoyl-CoA + reduced [electron-transfer flavoprotein]. It participates in lipid metabolism; fatty acid metabolism. Functionally, acyl-CoA dehydrogenase that exhibits broad specificity for linear acyl-CoA substrates, with a preference for long-chain substrates. The sequence is that of Broad-specificity linear acyl-CoA dehydrogenase FadE5 from Mycobacterium tuberculosis (strain ATCC 25618 / H37Rv).